A 320-amino-acid polypeptide reads, in one-letter code: Malate dehydrogenase (320 aa).

NAD(+) contacts are provided by residues 10-15 (GSGMIG) and aspartate 34. The substrate site is built by arginine 83 and arginine 89. Residues asparagine 96 and 119 to 121 (ITN) each bind NAD(+). Substrate contacts are provided by asparagine 121 and arginine 152. Catalysis depends on histidine 176, which acts as the Proton acceptor.

It belongs to the LDH/MDH superfamily. MDH type 3 family.

It catalyses the reaction (S)-malate + NAD(+) = oxaloacetate + NADH + H(+). Catalyzes the reversible oxidation of malate to oxaloacetate. This is Malate dehydrogenase from Brucella anthropi (strain ATCC 49188 / DSM 6882 / CCUG 24695 / JCM 21032 / LMG 3331 / NBRC 15819 / NCTC 12168 / Alc 37) (Ochrobactrum anthropi).